The following is a 333-amino-acid chain: MIDTTLPLTDIHRHLDGNIRPQTILELGRQYNISLPAQSLETLIPHVQVIANEPDLVSFLTKLDWGVKVLASLDACRRVAFENIEDAARNGLHYVELRFSPGYMAMAHQLPVAGVVEAVIDGVREGCRTFGVQAKLIGIMSRTFGEAACQQELEAFLAHRDQITALDLAGDELGFPGSLFLSHFNRARDAGWHITVHAGEAAGPESIWQAIRELGAERIGHGVKAIEDRALMDFLAEQQIGIESCLTSNIQTSTVADLAAHPLKTFLEHGIRASINTDDPGVQGVDIIHEYTVAAPAAGLSREQIRQAQINGLEMAFLSAEEKRALREKVAAK.

Zn(2+) contacts are provided by H12 and H14. 3 residues coordinate substrate: H14, D16, and G170. H197 contributes to the Zn(2+) binding site. E200 serves as the catalytic Proton donor. D278 contacts Zn(2+). D279 is a binding site for substrate.

Belongs to the metallo-dependent hydrolases superfamily. Adenosine and AMP deaminases family. Adenosine deaminase subfamily. Zn(2+) is required as a cofactor.

The enzyme catalyses adenosine + H2O + H(+) = inosine + NH4(+). It carries out the reaction 2'-deoxyadenosine + H2O + H(+) = 2'-deoxyinosine + NH4(+). In terms of biological role, catalyzes the hydrolytic deamination of adenosine and 2-deoxyadenosine. In Escherichia coli O45:K1 (strain S88 / ExPEC), this protein is Adenosine deaminase.